The sequence spans 264 residues: Putative hydro-lyase RBAM_004300 (264 aa).

The protein belongs to the D-glutamate cyclase family.

The chain is Putative hydro-lyase RBAM_004300 from Bacillus velezensis (strain DSM 23117 / BGSC 10A6 / LMG 26770 / FZB42) (Bacillus amyloliquefaciens subsp. plantarum).